The chain runs to 139 residues: Large ribosomal subunit protein uL16 (139 aa).

Basic residues predominate over residues 1–21; it reads MLSPRKTKFRKQHRGRMRGKA. Residues 1–23 are disordered; it reads MLSPRKTKFRKQHRGRMRGKATR.

This sequence belongs to the universal ribosomal protein uL16 family. Part of the 50S ribosomal subunit.

Functionally, binds 23S rRNA and is also seen to make contacts with the A and possibly P site tRNAs. In Acaryochloris marina (strain MBIC 11017), this protein is Large ribosomal subunit protein uL16.